Consider the following 480-residue polypeptide: MVSKPFQRPFSLATRLTFFISLATIAAFFAFAWIMIHSVKVHFAEQDINDLKEISATLERVLNHPDETQARRLMTLEDIVSGYSNVLISLADSQGKTVYHSPGAPDIREFTRDAIPDKDAQGGEVYLLSGPTMMMPGHGHGHMEHSNWRMINLPVGPLVDGKPIYTLYIALSIDFHLHYINDLMNKLIMTASVISILIVFIVLLAVHKGHAPIRSVSRQIQNITSKDLDVRLDPQTVPIELEQLVLSFNHMIERIEDVFTRQSNFSADIAHEIRTPITNLITQTEIALSQSRSQKELEDVLYSNLEELTRMAKMVSDMLFLAQADNNQLIPEKKMLNLADEVGKVFDFFEALAEDRGVELRFVGDKCQVAGDPLMLRRALSNLLSNALRYTPTGETIVVRCQTVDHLVQVIVENPGTPIAPEHLPRLFDRFYRVDPSRQRKGEGSGIGLAIVKSIVVAHKGTVAVTSDARGTRFVITLPA.

Residues 1 to 15 (MVSKPFQRPFSLATR) lie on the Cytoplasmic side of the membrane. A helical transmembrane segment spans residues 16–36 (LTFFISLATIAAFFAFAWIMI). Residues 37–186 (HSVKVHFAEQ…LHYINDLMNK (150 aa)) are Periplasmic-facing. The chain crosses the membrane as a helical span at residues 187–207 (LIMTASVISILIVFIVLLAVH). The HAMP domain occupies 208-260 (KGHAPIRSVSRQIQNITSKDLDVRLDPQTVPIELEQLVLSFNHMIERIEDVFT). The Cytoplasmic portion of the chain corresponds to 208–480 (KGHAPIRSVS…GTRFVITLPA (273 aa)). The 213-residue stretch at 268-480 (DIAHEIRTPI…GTRFVITLPA (213 aa)) folds into the Histidine kinase domain. The residue at position 271 (His271) is a Phosphohistidine; by autocatalysis.

Autophosphorylated.

The protein resides in the cell inner membrane. It catalyses the reaction ATP + protein L-histidine = ADP + protein N-phospho-L-histidine.. In terms of biological role, member of the two-component regulatory system CusS/CusR involved in response to copper and silver. Acts as a copper/silver ion sensor. Activates CusR by phosphorylation. The protein is Sensor histidine kinase CusS (cusS) of Escherichia coli (strain K12).